Here is a 1072-residue protein sequence, read N- to C-terminus: Carbamoyl phosphate synthase large chain (1072 aa).

Residues 1 to 401 (MPKRLDINTI…SLLKAVRSLE (401 aa)) are carboxyphosphate synthetic domain. The ATP site is built by Arg129, Arg169, Gly175, Gly176, Lys208, Ile210, Glu215, Gly241, Val242, His243, Gln284, and Glu298. The ATP-grasp 1 domain occupies 133-327 (RTLMQELNEP…IAKLAAKIAV (195 aa)). Mg(2+) is bound by residues Gln284, Glu298, and Asn300. Mn(2+)-binding residues include Gln284, Glu298, and Asn300. An oligomerization domain region spans residues 402-546 (LGVYHLELEH…YSTYGDENES (145 aa)). The interval 547–929 (VRTDRKSVVV…ALYKGLVASG (383 aa)) is carbamoyl phosphate synthetic domain. The region spanning 671–861 (EAALTQLGIP…MANVATKVIL (191 aa)) is the ATP-grasp 2 domain. Residues Arg707, Arg746, Glu752, Gly777, Val778, His779, Ser780, Gln820, and Glu832 each contribute to the ATP site. Positions 820, 832, and 834 each coordinate Mg(2+). Mn(2+) contacts are provided by Gln820, Glu832, and Asn834. Positions 930–1072 (INIPTHGSVI…QTKRHEVVHA (143 aa)) constitute an MGS-like domain. Residues 930–1072 (INIPTHGSVI…QTKRHEVVHA (143 aa)) are allosteric domain.

The protein belongs to the CarB family. As to quaternary structure, composed of two chains; the small (or glutamine) chain promotes the hydrolysis of glutamine to ammonia, which is used by the large (or ammonia) chain to synthesize carbamoyl phosphate. Tetramer of heterodimers (alpha,beta)4. Mg(2+) is required as a cofactor. The cofactor is Mn(2+).

The catalysed reaction is hydrogencarbonate + L-glutamine + 2 ATP + H2O = carbamoyl phosphate + L-glutamate + 2 ADP + phosphate + 2 H(+). The enzyme catalyses hydrogencarbonate + NH4(+) + 2 ATP = carbamoyl phosphate + 2 ADP + phosphate + 2 H(+). It functions in the pathway amino-acid biosynthesis; L-arginine biosynthesis; carbamoyl phosphate from bicarbonate: step 1/1. The protein operates within pyrimidine metabolism; UMP biosynthesis via de novo pathway; (S)-dihydroorotate from bicarbonate: step 1/3. Its function is as follows. Large subunit of the glutamine-dependent carbamoyl phosphate synthetase (CPSase). CPSase catalyzes the formation of carbamoyl phosphate from the ammonia moiety of glutamine, carbonate, and phosphate donated by ATP, constituting the first step of 2 biosynthetic pathways, one leading to arginine and/or urea and the other to pyrimidine nucleotides. The large subunit (synthetase) binds the substrates ammonia (free or transferred from glutamine from the small subunit), hydrogencarbonate and ATP and carries out an ATP-coupled ligase reaction, activating hydrogencarbonate by forming carboxy phosphate which reacts with ammonia to form carbamoyl phosphate. This Bacillus cereus (strain G9842) protein is Carbamoyl phosphate synthase large chain.